Reading from the N-terminus, the 437-residue chain is GTPase Obg (437 aa).

In terms of domain architecture, Obg spans 2 to 160 (SMFLDTAKIS…RQLELELKIL (159 aa)). Residues 161–338 (ADVGLVGFPS…LLEATAELLA (178 aa)) form the OBG-type G domain. Residues 167 to 174 (GFPSVGKS), 192 to 196 (FTTIV), 214 to 217 (DLPG), 284 to 287 (NKMD), and 319 to 321 (SSL) each bind GTP. Mg(2+) contacts are provided by S174 and T194. Positions 359–437 (GFAETEKNFE…IGKFEFEFVD (79 aa)) constitute an OCT domain.

Belongs to the TRAFAC class OBG-HflX-like GTPase superfamily. OBG GTPase family. In terms of assembly, monomer. It depends on Mg(2+) as a cofactor.

The protein localises to the cytoplasm. In terms of biological role, an essential GTPase which binds GTP, GDP and possibly (p)ppGpp with moderate affinity, with high nucleotide exchange rates and a fairly low GTP hydrolysis rate. Plays a role in control of the cell cycle, stress response, ribosome biogenesis and in those bacteria that undergo differentiation, in morphogenesis control. The polypeptide is GTPase Obg (Streptococcus pyogenes serotype M49 (strain NZ131)).